A 121-amino-acid polypeptide reads, in one-letter code: Large ribosomal subunit protein uL14 (121 aa).

This sequence belongs to the universal ribosomal protein uL14 family. In terms of assembly, part of the 50S ribosomal subunit. Forms a cluster with proteins L3 and L19. In the 70S ribosome, L14 and L19 interact and together make contacts with the 16S rRNA in bridges B5 and B8.

In terms of biological role, binds to 23S rRNA. Forms part of two intersubunit bridges in the 70S ribosome. This chain is Large ribosomal subunit protein uL14, found in Akkermansia muciniphila (strain ATCC BAA-835 / DSM 22959 / JCM 33894 / BCRC 81048 / CCUG 64013 / CIP 107961 / Muc).